A 688-amino-acid chain; its full sequence is Subtilisin-like protease 1 (688 aa).

An N-terminal signal peptide occupies residues 1 to 25; the sequence is MMLNKKVVALCTLTLHLFCIFLCLG. A propeptide spans 26 to 217 (inhibition peptide); the sequence is KEVRSEENGK…IESDKLVSAD (192 aa). Residues 99 to 129 form a disordered region; it reads EKNKNDNHNNNNNNISSSSSSSSNTFGEEKE. Low complexity predominate over residues 106-122; sequence HNNNNNNISSSSSSSSN. N112 carries N-linked (GlcNAc...) asparagine glycosylation. The Ca(2+) site is built by N145, T148, and P150. Residue N171 is glycosylated (N-linked (GlcNAc...) asparagine). G205 serves as a coordination point for Ca(2+). N261 carries an N-linked (GlcNAc...) asparagine glycan. 2 disordered regions span residues 264–284 and 303–332; these read HAAT…DTFS and NNNN…RPGK. A compositionally biased stretch (low complexity) spans 303–328; that stretch reads NNNNYYYSHSSNGHNSSSRNSSSSRS. Residues N317 and N322 are each glycosylated (N-linked (GlcNAc...) asparagine). D337 contacts Ca(2+). One can recognise a Peptidase S8 domain in the interval 343–661; sequence QWGLDLSRLD…AGYADINKAV (319 aa). Intrachain disulfides connect C369–C479 and C458–C475. The active-site Charge relay system is the D372. Ca(2+) contacts are provided by D381, E392, R396, F399, D400, D401, D402, N404, I406, D408, and D409. N417 carries an N-linked (GlcNAc...) asparagine glycan. The Charge relay system role is filled by H428. 4 residues coordinate Ca(2+): I439, N442, I444, and V446. N-linked (GlcNAc...) asparagine glycosylation is found at N488, N501, and N520. A disulfide bond links C521 and C534. N603 carries an N-linked (GlcNAc...) asparagine glycan. Residue S606 is the Charge relay system of the active site. The N-linked (GlcNAc...) asparagine glycan is linked to N675.

The protein belongs to the peptidase S8 family. Heterodimer between p54 form and prodomain p31; the interaction inhibits p54 catalytic activity. Heterodimer p31-p54 is monomeric at basic pH and dimeric at acidic pH; dimerization is driven by the N-terminal prodomain (p31). Requires Ca(2+) as cofactor. The prodomain (p31) is cleaved, probably by autocatalysis, during the transport to or in the Golgi apparatus, and remains non-covalently associated with the p54 form as an inhibitor. p54 is further cleaved into the p47 form. The p54-to-p47 conversion can be also autocatalytic. This cleavage is likely occurring in the exoneme prior to egress and is mediated by PMX/plasmepsin X. Heterodimer p31-p54 is activated by cleavage of prodomain (p31) by the aspartic protease PMX; cleavage by PMX abolishes inhibitory capacity of p31. Primary autocatalytic processing of SUB1 is essential for parasite growth; the p54-to-p47 conversion is dispensable for SUB1 functions in the parasites. Post-translationally, the disulfide bond between Cys-521 and Cys-534 acts as a redox-sensitive disulfide switch. The oxidized form is required for catalytic activity. In terms of processing, the relevance of the N-glycosylation is not clear. In an insect expression system, SUB1 glycosylation appears to affect its processing into the active mature form suggesting that SUB1 may not be N-glycosylated in parasites.

The protein resides in the secreted. It localises to the parasitophorous vacuole lumen. It carries out the reaction Hydrolysis of proteins with broad specificity for peptide bonds, and a preference for a large uncharged residue in P1. Hydrolyzes peptide amides.. Its activity is regulated as follows. p54 and probably p47 forms are inhibited by the non-covalent interaction with the cleaved propeptide. Inhibited by subtilisin propeptide-like protein SUB1-ProM. Inhibited by small molecule MRT12113. Functionally, serine protease which plays an essential role in merozoite invasion of and egress from host erythrocytes by processing and activating various merozoite surface and parasitophorous vacuole proteins. Mediates the proteolytic maturation of serine proteases SERA4, SERA5 and SERA6 just prior to merozoite egress. Prior to merozoite egress, cleaves merozoite surface proteins MSP1, MSP6 and MSP7, which form the MSP1/6/7 complex, and thereby may prime the parasite cell surface for invasion of fresh erythrocytes. Prior to merozoite egress, cleaves MSRP2 converting it to MSRP2 p25 form, and RAP1 converting it to RAP1 p67 form. The polypeptide is Subtilisin-like protease 1 (Plasmodium falciparum (isolate 3D7)).